The following is a 457-amino-acid chain: MDHLPIFCQLRDRDCLIVGGGDVAERKARLLLEAGARLTINALTFIPQFTVWANEGMLTLVEGPFDETLLDSCWLAIAATDDDTVNQRVSDAAESRRIFCNVVDAPKAASFIMPSIIDRSPLMVAVSSGGTSPVLARLLREKLESLLPQHLGQVARYAGQLRARVKKQFATMGERRRFWEKFFVNDRLAQSLANADEKAVNATTERLFSEPLDHRGEVVLVGAGPGDAGLLTLKGLQQIQQADIVVYDRLVSDDIMNLVRRDADRVFVGKRAGYHCVPQEEINQILLREAQKGKRVVRLKGGDPFIFGRGGEELETLCHAGIPFSVVPGITAASGCSAYSGIPLTHRDYAQSVRLVTGHLKTGGELDWENLAAEKQTLVFYMGLNQAATIQEKLIAFGMQADMPVALVENGTSVKQRVVHGVLTQLGELAQQVESPALIIVGRVVGLRDKLNWFSNY.

The tract at residues 1-204 (MDHLPIFCQL…ADEKAVNATT (204 aa)) is precorrin-2 dehydrogenase /sirohydrochlorin ferrochelatase. Residues 22-23 (DV) and 43-44 (LT) contribute to the NAD(+) site. Residue Ser128 is modified to Phosphoserine. Residues 216–457 (GEVVLVGAGP…RDKLNWFSNY (242 aa)) are uroporphyrinogen-III C-methyltransferase. Pro225 provides a ligand contact to S-adenosyl-L-methionine. The active-site Proton acceptor is the Asp248. Residue Lys270 is the Proton donor of the active site. S-adenosyl-L-methionine contacts are provided by residues 301-303 (GGD), Ile306, 331-332 (TA), Met382, and Gly411.

The protein in the N-terminal section; belongs to the precorrin-2 dehydrogenase / sirohydrochlorin ferrochelatase family. It in the C-terminal section; belongs to the precorrin methyltransferase family.

It carries out the reaction uroporphyrinogen III + 2 S-adenosyl-L-methionine = precorrin-2 + 2 S-adenosyl-L-homocysteine + H(+). The catalysed reaction is precorrin-2 + NAD(+) = sirohydrochlorin + NADH + 2 H(+). The enzyme catalyses siroheme + 2 H(+) = sirohydrochlorin + Fe(2+). The protein operates within cofactor biosynthesis; adenosylcobalamin biosynthesis; precorrin-2 from uroporphyrinogen III: step 1/1. It functions in the pathway cofactor biosynthesis; adenosylcobalamin biosynthesis; sirohydrochlorin from precorrin-2: step 1/1. It participates in porphyrin-containing compound metabolism; siroheme biosynthesis; precorrin-2 from uroporphyrinogen III: step 1/1. Its pathway is porphyrin-containing compound metabolism; siroheme biosynthesis; siroheme from sirohydrochlorin: step 1/1. The protein operates within porphyrin-containing compound metabolism; siroheme biosynthesis; sirohydrochlorin from precorrin-2: step 1/1. Its function is as follows. Multifunctional enzyme that catalyzes the SAM-dependent methylations of uroporphyrinogen III at position C-2 and C-7 to form precorrin-2 via precorrin-1. Then it catalyzes the NAD-dependent ring dehydrogenation of precorrin-2 to yield sirohydrochlorin. Finally, it catalyzes the ferrochelation of sirohydrochlorin to yield siroheme. In Salmonella heidelberg (strain SL476), this protein is Siroheme synthase.